Consider the following 508-residue polypeptide: Aspartyl/glutamyl-tRNA(Asn/Gln) amidotransferase subunit B (508 aa).

It belongs to the GatB/GatE family. GatB subfamily. In terms of assembly, heterotrimer of A, B and C subunits.

The catalysed reaction is L-glutamyl-tRNA(Gln) + L-glutamine + ATP + H2O = L-glutaminyl-tRNA(Gln) + L-glutamate + ADP + phosphate + H(+). It catalyses the reaction L-aspartyl-tRNA(Asn) + L-glutamine + ATP + H2O = L-asparaginyl-tRNA(Asn) + L-glutamate + ADP + phosphate + 2 H(+). Allows the formation of correctly charged Asn-tRNA(Asn) or Gln-tRNA(Gln) through the transamidation of misacylated Asp-tRNA(Asn) or Glu-tRNA(Gln) in organisms which lack either or both of asparaginyl-tRNA or glutaminyl-tRNA synthetases. The reaction takes place in the presence of glutamine and ATP through an activated phospho-Asp-tRNA(Asn) or phospho-Glu-tRNA(Gln). The protein is Aspartyl/glutamyl-tRNA(Asn/Gln) amidotransferase subunit B of Salinibacter ruber (strain DSM 13855 / M31).